The primary structure comprises 150 residues: Endoribonuclease YbeY (150 aa).

Zn(2+)-binding residues include histidine 113, histidine 117, and histidine 123.

This sequence belongs to the endoribonuclease YbeY family. Zn(2+) serves as cofactor.

It localises to the cytoplasm. Functionally, single strand-specific metallo-endoribonuclease involved in late-stage 70S ribosome quality control and in maturation of the 3' terminus of the 16S rRNA. The protein is Endoribonuclease YbeY of Syntrophotalea carbinolica (strain DSM 2380 / NBRC 103641 / GraBd1) (Pelobacter carbinolicus).